The following is a 494-amino-acid chain: Flagellin A (494 aa).

It belongs to the bacterial flagellin family. Heteromer of FlaA and FlaB. FlaB is located proximal to the hook while the remainder of the filament is composed of the predominant FlaA.

It localises to the secreted. The protein localises to the bacterial flagellum. Flagellin is the subunit protein which polymerizes to form the filaments of bacterial flagella. Important for motility and virulence. The chain is Flagellin A (flaA) from Helicobacter mustelae.